The chain runs to 275 residues: MAALDGLPPLRDVIQRHGLDAKKALGQNFLLDLNITQKVARTAGDLTNATVFEVGPGPGGLTRALLALGAKKVIAIERDSRCLPALAEISDHYPGRLEVIEGDALKTDFEAMAPDGPVKIVANLPYNVGTQLLINWLMPRQWPPFWDSLTLMFQKEVGQRIVAEADDDHYGRLGVLCGWRTEAHMAFDLSPQAFTPPPKVTSTVVHLTPRPAPIPCEIAKLEKLTQAAFGQRRKMLRASLKPLGGEALLNRAEIDPSRRAETLSVEEFCRIANLL.

Residues asparagine 28, leucine 30, glycine 55, glutamate 77, aspartate 103, and asparagine 123 each contribute to the S-adenosyl-L-methionine site.

This sequence belongs to the class I-like SAM-binding methyltransferase superfamily. rRNA adenine N(6)-methyltransferase family. RsmA subfamily.

It localises to the cytoplasm. It carries out the reaction adenosine(1518)/adenosine(1519) in 16S rRNA + 4 S-adenosyl-L-methionine = N(6)-dimethyladenosine(1518)/N(6)-dimethyladenosine(1519) in 16S rRNA + 4 S-adenosyl-L-homocysteine + 4 H(+). Its function is as follows. Specifically dimethylates two adjacent adenosines (A1518 and A1519) in the loop of a conserved hairpin near the 3'-end of 16S rRNA in the 30S particle. May play a critical role in biogenesis of 30S subunits. The protein is Ribosomal RNA small subunit methyltransferase A of Allorhizobium ampelinum (strain ATCC BAA-846 / DSM 112012 / S4) (Agrobacterium vitis (strain S4)).